The sequence spans 475 residues: Sulfate adenylyltransferase subunit 1 (475 aa).

Residues 25–239 enclose the tr-type G domain; it reads KSLLRFLTCG…EVLETVEIQR (215 aa). The interval 34 to 41 is G1; the sequence is GSVDDGKS. 34 to 41 lines the GTP pocket; the sequence is GSVDDGKS. The tract at residues 92 to 96 is G2; the sequence is GITID. The G3 stretch occupies residues 113-116; it reads DTPG. Residues 113 to 117 and 168 to 171 each bind GTP; these read DTPGH and NKMD. Residues 168-171 form a G4 region; that stretch reads NKMD. Residues 206–208 are G5; sequence SAL.

It belongs to the TRAFAC class translation factor GTPase superfamily. Classic translation factor GTPase family. CysN/NodQ subfamily. In terms of assembly, heterodimer composed of CysD, the smaller subunit, and CysN.

The enzyme catalyses sulfate + ATP + H(+) = adenosine 5'-phosphosulfate + diphosphate. The protein operates within sulfur metabolism; hydrogen sulfide biosynthesis; sulfite from sulfate: step 1/3. Functionally, with CysD forms the ATP sulfurylase (ATPS) that catalyzes the adenylation of sulfate producing adenosine 5'-phosphosulfate (APS) and diphosphate, the first enzymatic step in sulfur assimilation pathway. APS synthesis involves the formation of a high-energy phosphoric-sulfuric acid anhydride bond driven by GTP hydrolysis by CysN coupled to ATP hydrolysis by CysD. The chain is Sulfate adenylyltransferase subunit 1 from Shigella flexneri.